The primary structure comprises 116 residues: Putative iron-sulfur cluster insertion protein ErpA (116 aa).

Iron-sulfur cluster is bound by residues cysteine 44, cysteine 108, and cysteine 110.

Belongs to the HesB/IscA family. Homodimer. Iron-sulfur cluster serves as cofactor.

Functionally, required for insertion of 4Fe-4S clusters. The chain is Putative iron-sulfur cluster insertion protein ErpA from Aromatoleum aromaticum (strain DSM 19018 / LMG 30748 / EbN1) (Azoarcus sp. (strain EbN1)).